A 363-amino-acid polypeptide reads, in one-letter code: Phosrestin-2 (363 aa).

It belongs to the arrestin family.

The sequence is that of Phosrestin-2 (ARR1) from Calliphora vicina (Blue blowfly).